The primary structure comprises 411 residues: Dual-specificity RNA methyltransferase RlmN (411 aa).

Residue E125 is the Proton acceptor of the active site. One can recognise a Radical SAM core domain in the interval 131-380 (EEGRGTLCIS…IRTPRGRDIL (250 aa)). A disulfide bridge links C138 with C383. Positions 145, 149, and 152 each coordinate [4Fe-4S] cluster. S-adenosyl-L-methionine is bound by residues 209 to 210 (GE), S241, 263 to 265 (SLH), and N340. Residue C383 is the S-methylcysteine intermediate of the active site.

It belongs to the radical SAM superfamily. RlmN family. [4Fe-4S] cluster serves as cofactor.

It localises to the cytoplasm. It catalyses the reaction adenosine(2503) in 23S rRNA + 2 reduced [2Fe-2S]-[ferredoxin] + 2 S-adenosyl-L-methionine = 2-methyladenosine(2503) in 23S rRNA + 5'-deoxyadenosine + L-methionine + 2 oxidized [2Fe-2S]-[ferredoxin] + S-adenosyl-L-homocysteine. The catalysed reaction is adenosine(37) in tRNA + 2 reduced [2Fe-2S]-[ferredoxin] + 2 S-adenosyl-L-methionine = 2-methyladenosine(37) in tRNA + 5'-deoxyadenosine + L-methionine + 2 oxidized [2Fe-2S]-[ferredoxin] + S-adenosyl-L-homocysteine. Specifically methylates position 2 of adenine 2503 in 23S rRNA and position 2 of adenine 37 in tRNAs. m2A2503 modification seems to play a crucial role in the proofreading step occurring at the peptidyl transferase center and thus would serve to optimize ribosomal fidelity. In Brucella melitensis biotype 2 (strain ATCC 23457), this protein is Dual-specificity RNA methyltransferase RlmN.